Reading from the N-terminus, the 179-residue chain is Large ribosomal subunit protein uL5 (179 aa).

It belongs to the universal ribosomal protein uL5 family. In terms of assembly, part of the 50S ribosomal subunit; part of the 5S rRNA/L5/L18/L25 subcomplex. Contacts the 5S rRNA and the P site tRNA. Forms a bridge to the 30S subunit in the 70S ribosome.

In terms of biological role, this is one of the proteins that bind and probably mediate the attachment of the 5S RNA into the large ribosomal subunit, where it forms part of the central protuberance. In the 70S ribosome it contacts protein S13 of the 30S subunit (bridge B1b), connecting the 2 subunits; this bridge is implicated in subunit movement. Contacts the P site tRNA; the 5S rRNA and some of its associated proteins might help stabilize positioning of ribosome-bound tRNAs. This Halothermothrix orenii (strain H 168 / OCM 544 / DSM 9562) protein is Large ribosomal subunit protein uL5.